A 231-amino-acid chain; its full sequence is Biosynthetic peptidoglycan transglycosylase (231 aa).

Residues 10-30 form a helical membrane-spanning segment; the sequence is LLLLGLIGLFLVWQLWLLGWV.

The protein belongs to the glycosyltransferase 51 family.

It localises to the cell inner membrane. It catalyses the reaction [GlcNAc-(1-&gt;4)-Mur2Ac(oyl-L-Ala-gamma-D-Glu-L-Lys-D-Ala-D-Ala)](n)-di-trans,octa-cis-undecaprenyl diphosphate + beta-D-GlcNAc-(1-&gt;4)-Mur2Ac(oyl-L-Ala-gamma-D-Glu-L-Lys-D-Ala-D-Ala)-di-trans,octa-cis-undecaprenyl diphosphate = [GlcNAc-(1-&gt;4)-Mur2Ac(oyl-L-Ala-gamma-D-Glu-L-Lys-D-Ala-D-Ala)](n+1)-di-trans,octa-cis-undecaprenyl diphosphate + di-trans,octa-cis-undecaprenyl diphosphate + H(+). Its pathway is cell wall biogenesis; peptidoglycan biosynthesis. Its function is as follows. Peptidoglycan polymerase that catalyzes glycan chain elongation from lipid-linked precursors. The sequence is that of Biosynthetic peptidoglycan transglycosylase from Dechloromonas aromatica (strain RCB).